Here is a 296-residue protein sequence, read N- to C-terminus: Homoserine kinase (296 aa).

Residue 85–95 (PLSRGLGSSAA) participates in ATP binding.

Belongs to the GHMP kinase family. Homoserine kinase subfamily.

The protein localises to the cytoplasm. The enzyme catalyses L-homoserine + ATP = O-phospho-L-homoserine + ADP + H(+). It participates in amino-acid biosynthesis; L-threonine biosynthesis; L-threonine from L-aspartate: step 4/5. In terms of biological role, catalyzes the ATP-dependent phosphorylation of L-homoserine to L-homoserine phosphate. This is Homoserine kinase from Clostridium acetobutylicum (strain ATCC 824 / DSM 792 / JCM 1419 / IAM 19013 / LMG 5710 / NBRC 13948 / NRRL B-527 / VKM B-1787 / 2291 / W).